Reading from the N-terminus, the 288-residue chain is 4-hydroxybenzoate octaprenyltransferase (288 aa).

Transmembrane regions (helical) follow at residues 23 to 43 (IGSL…GKGI), 46 to 66 (TKIL…GCVV), 98 to 118 (ILFV…NSMT), 141 to 161 (LPQV…FAAV), 165 to 185 (LPLV…AYDT), 213 to 233 (LIIG…GWLM), 234 to 254 (NLGG…VHQQ), and 268 to 288 (AFLN…ISYL).

Belongs to the UbiA prenyltransferase family. Mg(2+) serves as cofactor.

Its subcellular location is the cell inner membrane. It carries out the reaction all-trans-octaprenyl diphosphate + 4-hydroxybenzoate = 4-hydroxy-3-(all-trans-octaprenyl)benzoate + diphosphate. Its pathway is cofactor biosynthesis; ubiquinone biosynthesis. Functionally, catalyzes the prenylation of para-hydroxybenzoate (PHB) with an all-trans polyprenyl group. Mediates the second step in the final reaction sequence of ubiquinone-8 (UQ-8) biosynthesis, which is the condensation of the polyisoprenoid side chain with PHB, generating the first membrane-bound Q intermediate 3-octaprenyl-4-hydroxybenzoate. In Yersinia enterocolitica serotype O:8 / biotype 1B (strain NCTC 13174 / 8081), this protein is 4-hydroxybenzoate octaprenyltransferase.